The chain runs to 1946 residues: Integrin beta-like protein E (1946 aa).

Residues 1–22 form the signal peptide; sequence MNNLFKFLFVLLAIFCPPISDL. Over 23 to 1875 the chain is Extracellular; that stretch reads VVSHGVPQQH…ATTQTTNNKT (1853 aa). 3 N-linked (GlcNAc...) asparagine glycosylation sites follow: Asn-107, Asn-134, and Asn-203. The EGF-like domain occupies 423-460; sequence YGQNCDPTPPCDKGIPNEGILGDGKCMCINGYSGDKCD. Disulfide bonds link Cys-433/Cys-448 and Cys-450/Cys-459. In terms of domain architecture, VWFA spans 514–699; it reads DVFVLVDVNV…AGLKSVLSNV (186 aa). N-linked (GlcNAc...) asparagine glycans are attached at residues Asn-705, Asn-860, Asn-1043, Asn-1113, Asn-1177, Asn-1374, Asn-1401, Asn-1513, Asn-1611, Asn-1620, Asn-1662, Asn-1671, Asn-1737, Asn-1743, Asn-1762, Asn-1812, Asn-1852, and Asn-1873. A helical transmembrane segment spans residues 1876–1896; sequence VLTGAIAGAAAGTALIAAAAW. The Cytoplasmic portion of the chain corresponds to 1897 to 1946; that stretch reads KLLRKAAPPTDTFFSEAAFLGDGVNANPLYEQSASAAENPLYQSASDNTD.

The protein belongs to the SIB family. Interacts with talA/talin.

Its subcellular location is the membrane. Its function is as follows. Implicated in cellular adhesion. In Dictyostelium discoideum (Social amoeba), this protein is Integrin beta-like protein E (sibE).